Reading from the N-terminus, the 84-residue chain is Large ribosomal subunit protein bL27 (84 aa).

The disordered stretch occupies residues 1–20 (MAHKKAGGSTRNGRDSNPKY).

The protein belongs to the bacterial ribosomal protein bL27 family.

The sequence is that of Large ribosomal subunit protein bL27 from Francisella tularensis subsp. tularensis (strain FSC 198).